The following is a 377-amino-acid chain: ATP synthase gamma chain, chloroplastic (377 aa).

A chloroplast-targeting transit peptide spans 1 to 55 (MSCSNLTMLVSSKPSLSDSSALSFRSSVSPFQLPNHNTSGPSNPSRSSSVTPVHC). Residues 30-52 (PFQLPNHNTSGPSNPSRSSSVTP) are disordered. Residues 37 to 52 (NTSGPSNPSRSSSVTP) are compositionally biased toward low complexity. Residue Cys-143 is part of the active site. A disulfide bridge connects residues Cys-253 and Cys-259.

This sequence belongs to the ATPase gamma chain family. As to quaternary structure, F-type ATPases have 2 components, CF(1) - the catalytic core - and CF(0) - the membrane proton channel. CF(1) has five subunits: alpha(3), beta(3), gamma(1), delta(1), epsilon(1). CF(0) has four main subunits: a, b, b' and c.

The protein resides in the plastid. It is found in the chloroplast thylakoid membrane. Its function is as follows. Produces ATP from ADP in the presence of a proton gradient across the membrane. The gamma chain is believed to be important in regulating ATPase activity and the flow of protons through the CF(0) complex. This is ATP synthase gamma chain, chloroplastic (ATPC) from Nicotiana tabacum (Common tobacco).